Here is a 208-residue protein sequence, read N- to C-terminus: LexA repressor (208 aa).

Residues 28–48 constitute a DNA-binding region (H-T-H motif); sequence VREIGEAVGLASSSTVHGHLA. Residues Ser130 and Lys168 each act as for autocatalytic cleavage activity in the active site.

Belongs to the peptidase S24 family. In terms of assembly, homodimer.

The catalysed reaction is Hydrolysis of Ala-|-Gly bond in repressor LexA.. Its function is as follows. Represses a number of genes involved in the response to DNA damage (SOS response), including recA and lexA. In the presence of single-stranded DNA, RecA interacts with LexA causing an autocatalytic cleavage which disrupts the DNA-binding part of LexA, leading to derepression of the SOS regulon and eventually DNA repair. The sequence is that of LexA repressor from Shouchella clausii (strain KSM-K16) (Alkalihalobacillus clausii).